A 436-amino-acid chain; its full sequence is MPKPVVAIVGRPNVGKSTIFNRIVGERISIVEDIPGVTRDRIYSAGEWLNHEFNIIDTGGIDIGDEPFLTQIRQQAEVAIDEADVIIFMTNGRDGVTAADEEVAKILYRSNKPVVLAVNKVDNPEMRNEIYDFYALGFGEPFPISGTHGLGLGDLLDEVAQHFPKVEEEEYDDETIRFCLIGRPNVGKSSLVNALLGQERVIVSNVAGTTRDAVDTPYTKDGQDYVIIDTAGMRKKGKVYESTEKYSVLRALRAIERSDVVLVVLDGEEGIIEQDKKIAGYAHDSGRAVVIVVNKWDAVKKDEKTMKAFEDNIRAHFQFLDYAPIVFLSAKTKKRTQTLLPVINQVSESHNIRVQTNVLNDVIMDAVAMNPTPTHNGSRLKIFYATQVAVKPPTFVVFVNDPELMHFSYERFLKNRLRESFGFVGTPIRIIARARD.

2 consecutive EngA-type G domains span residues 4-167 (PVVA…PKVE) and 176-351 (IRFC…ESHN). Residues 10–17 (GRPNVGKS), 57–61 (DTGGI), 119–122 (NKVD), 182–189 (GRPNVGKS), 229–233 (DTAGM), and 294–297 (NKWD) each bind GTP. The KH-like domain maps to 352–436 (IRVQTNVLND…PIRIIARARD (85 aa)).

It belongs to the TRAFAC class TrmE-Era-EngA-EngB-Septin-like GTPase superfamily. EngA (Der) GTPase family. In terms of assembly, associates with the 50S ribosomal subunit.

Functionally, GTPase that plays an essential role in the late steps of ribosome biogenesis. In Bacillus cytotoxicus (strain DSM 22905 / CIP 110041 / 391-98 / NVH 391-98), this protein is GTPase Der.